Here is a 374-residue protein sequence, read N- to C-terminus: Ribosomal RNA large subunit methyltransferase G (374 aa).

The protein belongs to the methyltransferase superfamily. RlmG family.

It is found in the cytoplasm. The enzyme catalyses guanosine(1835) in 23S rRNA + S-adenosyl-L-methionine = N(2)-methylguanosine(1835) in 23S rRNA + S-adenosyl-L-homocysteine + H(+). In terms of biological role, specifically methylates the guanine in position 1835 (m2G1835) of 23S rRNA. The protein is Ribosomal RNA large subunit methyltransferase G of Photobacterium profundum (strain SS9).